The chain runs to 868 residues: Leucine--tRNA ligase (868 aa).

A 'HIGH' region motif is present at residues 42–52; sequence PYPSGKLHMGH. The 'KMSKS' region motif lies at 627 to 631; sequence KMAKS. Lys-630 lines the ATP pocket.

The protein belongs to the class-I aminoacyl-tRNA synthetase family.

The protein localises to the cytoplasm. It carries out the reaction tRNA(Leu) + L-leucine + ATP = L-leucyl-tRNA(Leu) + AMP + diphosphate. This is Leucine--tRNA ligase from Pseudomonas fluorescens (strain Pf0-1).